Reading from the N-terminus, the 270-residue chain is Phosphonoacetaldehyde hydrolase (270 aa).

The Nucleophile role is filled by D11. D11 and A13 together coordinate Mg(2+). The active-site Schiff-base intermediate with substrate is the K53. Mg(2+) is bound at residue D187.

It belongs to the HAD-like hydrolase superfamily. PhnX family. Homodimer. Mg(2+) is required as a cofactor.

The catalysed reaction is phosphonoacetaldehyde + H2O = acetaldehyde + phosphate + H(+). In terms of biological role, involved in phosphonate degradation. This is Phosphonoacetaldehyde hydrolase from Salmonella paratyphi C (strain RKS4594).